A 288-amino-acid chain; its full sequence is Male determiner protein Nix (288 aa).

RRM domains follow at residues Tyr19–Ser94, Ile108–Arg179, and Arg205–Glu282.

Male determiner protein (M-factor) that controls male somatic sexual differentiation. Acts as a dominant factor that regulates the mRNA splicing of doublesex (dsx) or fruitless (fru) transcripts and promotes expression of male splice forms of dsx and fru. The chain is Male determiner protein Nix from Aedes aegypti (Yellowfever mosquito).